The sequence spans 104 residues: Large ribosomal subunit protein eL42 (104 aa).

Positions 22 to 56 (KVSQAKKSKDNPRAQGNRRYARKQRGYGGQTKPIL) are disordered.

The protein belongs to the eukaryotic ribosomal protein eL42 family.

This is Large ribosomal subunit protein eL42 (RPL44) from Encephalitozoon cuniculi (strain GB-M1) (Microsporidian parasite).